A 251-amino-acid polypeptide reads, in one-letter code: Probable transcriptional regulatory protein cu0933 (251 aa).

The disordered stretch occupies residues 56 to 79; that stretch reads AKKSSVPNDNIERARKRGSGEEAG.

This sequence belongs to the TACO1 family.

It is found in the cytoplasm. The sequence is that of Probable transcriptional regulatory protein cu0933 from Corynebacterium urealyticum (strain ATCC 43042 / DSM 7109).